A 162-amino-acid polypeptide reads, in one-letter code: Transcription elongation factor GreA (162 aa).

Positions 50-75 (YHAAREEQGHLESRIRQLQELLRTAK) form a coiled coil.

It belongs to the GreA/GreB family.

Functionally, necessary for efficient RNA polymerase transcription elongation past template-encoded arresting sites. The arresting sites in DNA have the property of trapping a certain fraction of elongating RNA polymerases that pass through, resulting in locked ternary complexes. Cleavage of the nascent transcript by cleavage factors such as GreA or GreB allows the resumption of elongation from the new 3'terminus. GreA releases sequences of 2 to 3 nucleotides. The polypeptide is Transcription elongation factor GreA (Saccharopolyspora erythraea (strain ATCC 11635 / DSM 40517 / JCM 4748 / NBRC 13426 / NCIMB 8594 / NRRL 2338)).